Consider the following 340-residue polypeptide: Tryptophan--tRNA ligase (340 aa).

ATP is bound by residues 11–13 (RPT) and 19–20 (GH). A 'HIGH' region motif is present at residues 12 to 20 (PTGKLHLGH). Asp-140 is an L-tryptophan binding site. ATP is bound by residues 152–154 (GND), Leu-194, and 202–206 (KMSKS). A 'KMSKS' region motif is present at residues 202 to 206 (KMSKS).

This sequence belongs to the class-I aminoacyl-tRNA synthetase family. As to quaternary structure, homodimer.

The protein resides in the cytoplasm. It catalyses the reaction tRNA(Trp) + L-tryptophan + ATP = L-tryptophyl-tRNA(Trp) + AMP + diphosphate + H(+). In terms of biological role, catalyzes the attachment of tryptophan to tRNA(Trp). The protein is Tryptophan--tRNA ligase of Streptococcus pyogenes serotype M3 (strain ATCC BAA-595 / MGAS315).